The chain runs to 598 residues: NADH-quinone oxidoreductase subunit C/D (598 aa).

The segment at 1-188 (MTDSTTHDAL…DPFVLTKQKE (188 aa)) is NADH dehydrogenase I subunit C. An NADH dehydrogenase I subunit D region spans residues 212 to 598 (DFMFLNLGPN…IDFVMSDVDR (387 aa)).

This sequence in the N-terminal section; belongs to the complex I 30 kDa subunit family. It in the C-terminal section; belongs to the complex I 49 kDa subunit family. As to quaternary structure, NDH-1 is composed of 13 different subunits. Subunits NuoB, CD, E, F, and G constitute the peripheral sector of the complex.

It is found in the cell inner membrane. It catalyses the reaction a quinone + NADH + 5 H(+)(in) = a quinol + NAD(+) + 4 H(+)(out). NDH-1 shuttles electrons from NADH, via FMN and iron-sulfur (Fe-S) centers, to quinones in the respiratory chain. The immediate electron acceptor for the enzyme in this species is believed to be ubiquinone. Couples the redox reaction to proton translocation (for every two electrons transferred, four hydrogen ions are translocated across the cytoplasmic membrane), and thus conserves the redox energy in a proton gradient. This chain is NADH-quinone oxidoreductase subunit C/D, found in Serratia proteamaculans (strain 568).